A 122-amino-acid chain; its full sequence is Ribosome-binding factor A (122 aa).

The segment covering 95–111 (PTVERVTRIQRTLREVS) has biased composition (basic and acidic residues). A disordered region spans residues 95-122 (PTVERVTRIQRTLREVSGEDGDGNGTQE).

The protein belongs to the RbfA family. Monomer. Binds 30S ribosomal subunits, but not 50S ribosomal subunits or 70S ribosomes.

It localises to the cytoplasm. One of several proteins that assist in the late maturation steps of the functional core of the 30S ribosomal subunit. Associates with free 30S ribosomal subunits (but not with 30S subunits that are part of 70S ribosomes or polysomes). Required for efficient processing of 16S rRNA. May interact with the 5'-terminal helix region of 16S rRNA. The chain is Ribosome-binding factor A from Rubrobacter xylanophilus (strain DSM 9941 / JCM 11954 / NBRC 16129 / PRD-1).